A 647-amino-acid chain; its full sequence is DNA ligase (647 aa).

Residues 30-34 (DEEYD), 79-80 (SM), and Glu-105 contribute to the NAD(+) site. The active-site N6-AMP-lysine intermediate is the Lys-107. NAD(+) is bound by residues Arg-128, Glu-162, and Lys-301. Residues Cys-395, Cys-398, Cys-411, and Cys-416 each coordinate Zn(2+). In terms of domain architecture, BRCT spans 570 to 647 (KSDGVIFGKT…ESAFNELVKE (78 aa)).

Belongs to the NAD-dependent DNA ligase family. LigA subfamily. Requires Mg(2+) as cofactor. The cofactor is Mn(2+).

It catalyses the reaction NAD(+) + (deoxyribonucleotide)n-3'-hydroxyl + 5'-phospho-(deoxyribonucleotide)m = (deoxyribonucleotide)n+m + AMP + beta-nicotinamide D-nucleotide.. Its function is as follows. DNA ligase that catalyzes the formation of phosphodiester linkages between 5'-phosphoryl and 3'-hydroxyl groups in double-stranded DNA using NAD as a coenzyme and as the energy source for the reaction. It is essential for DNA replication and repair of damaged DNA. This chain is DNA ligase, found in Campylobacter jejuni subsp. jejuni serotype O:6 (strain 81116 / NCTC 11828).